The following is a 568-amino-acid chain: Cytochrome P450 monooxygenase 41 (568 aa).

Residues 21 to 41 (LTSLVPLILSVMVCLIATVTI) traverse the membrane as a helical segment. N-linked (GlcNAc...) asparagine glycans are attached at residues asparagine 321 and asparagine 377. Cysteine 514 is a heme binding site.

The protein belongs to the cytochrome P450 family. It depends on heme as a cofactor.

The protein localises to the membrane. Its pathway is secondary metabolite biosynthesis. Cytochrome P450 monooxygenase that is able to use 3,5-dimethoxy-trans-stilbene and 3,5,4'-trimethoxy-trans-stilbene as substrates for oxidation. The chain is Cytochrome P450 monooxygenase 41 from Postia placenta (strain ATCC 44394 / Madison 698-R) (Brown rot fungus).